Reading from the N-terminus, the 660-residue chain is Probable E3 ubiquitin ligase complex SCF subunit sconB (660 aa).

Residues 1 to 13 (MHNENSVLRDAKE) are compositionally biased toward basic and acidic residues. Disordered stretches follow at residues 1 to 34 (MHNE…MTPY) and 86 to 108 (LGTG…RRQA). The 47-residue stretch at 175-221 (IDFITALPPEISFKILSYLDTASLCRAAQVSRGWKCLADDDVVWHRM) folds into the F-box domain. 7 WD repeats span residues 340–379 (GHTN…RTLT), 381–419 (HTSG…STYT), 421–457 (HLGG…TFLL), 459–500 (GHSD…RTFQ), 542–586 (SQVS…CLRT), 587–626 (FFGH…CERT), and 629–660 (GHSG…SFKN). Residues 521-553 (GHDASHEEDSNASVSGDESPSSQVSCSPTAAFF) form a disordered region. The span at 531 to 548 (NASVSGDESPSSQVSCSP) shows a compositional bias: polar residues.

This sequence belongs to the WD repeat MET30/SCONB/SCON-2 family. In terms of assembly, component of the SCF(sconB) E3 ubiquitin ligase complex.

Its pathway is protein modification; protein ubiquitination. Component of the SCF(sconB) E3 ubiquitin ligase complex involved in the regulation of sulfur metabolite repression, probably by mediating the inactivation or degradation of the metR transcription factor. The polypeptide is Probable E3 ubiquitin ligase complex SCF subunit sconB (sconB) (Talaromyces marneffei (strain ATCC 18224 / CBS 334.59 / QM 7333) (Penicillium marneffei)).